The chain runs to 566 residues: Chondroitin sulfate proteoglycan 5 (566 aa).

An N-terminal signal peptide occupies residues 1–30 (MGRAGGGGPDWGPPPVLLLLGVTLVLTAGA). The Extracellular portion of the chain corresponds to 31 to 423 (VPARETGSAI…SIITDFQVMC (393 aa)). An O-linked (Xyl...) (chondroitin sulfate) serine glycan is attached at Ser38. The interval 56-93 (ANDTREEAGLPAAGEDETSWTERGSEMAAVGPGVGPEE) is disordered. Residue Asn57 is glycosylated (N-linked (GlcNAc...) asparagine). O-linked (GalNAc...) threonine glycosylation is present at Thr76. O-linked (Xyl...) (chondroitin sulfate) serine glycosylation is present at Ser123. A glycan (O-linked (GalNAc...) threonine) is linked at Thr132. 3 disordered regions span residues 137–173 (DEALGSSTMPPAIPEATETSGPPSPAVHDKPSVGPEL), 218–249 (DSEGRGADMGSFPGSPGTSENHPDTEGETPSW), and 263–327 (ESDF…PPQH). The O-linked (GalNAc...) serine glycan is linked to Ser143. 3 O-linked (GalNAc...) threonine glycosylation sites follow: Thr144, Thr153, and Thr155. Residues Ser156 and Ser160 are each glycosylated (O-linked (GalNAc...) serine). A compositionally biased stretch (basic and acidic residues) spans 163-173 (VHDKPSVGPEL). Residue Thr235 is glycosylated (O-linked (GalNAc...) threonine). Residues 265–301 (DFYPTTSFYDDLEEEEEEEEDKDTVGGGDLEDENDLL) form an interaction with TNC and TNR region. The segment covering 274 to 286 (DDLEEEEEEEEDK) has biased composition (acidic residues). 2 N-linked (GlcNAc...) asparagine glycosylation sites follow: Asn355 and Asn367. The EGF-like domain occupies 371 to 413 (RSVCDLFPSYCHNGGQCYLVENIGAFCRCNTQDYIWHKGMRCE). Intrachain disulfides connect Cys374-Cys387, Cys381-Cys397, and Cys399-Cys412. A phosphoserine mark is found at Gly394 and Phe396. Cys397 bears the Phosphothreonine mark. Residues 424–444 (VAVGSAALVLLLLFMMTVFFA) traverse the membrane as a helical segment. The interaction with GOPC stretch occupies residues 442–460 (FFAKKLYLLKTENTKLRRT). Residues 445 to 566 (KKLYLLKTEN…GVNCLQNNLT (122 aa)) are Cytoplasmic-facing. Residues Ser467, Ser475, and Ser477 each carry the phosphoserine modification. At Thr478 the chain carries Phosphothreonine. Ser483 and Ser543 each carry phosphoserine. Residues 531–566 (KEEESFNIQNSMSPKLEGGKGDQDDLGVNCLQNNLT) are disordered.

In terms of assembly, binds TNR and probably TNC. Interacts with ERBB3 and GOPC. Interacts with MDK; this interaction is independent of the presence of chondroitin sulfate chains and promotes elongation of oligodendroglial precursor-like cells. Post-translationally, N-glycosylated. O-glycosylated; contains chondroitin sulfate glycans. Part-time proteoglycan, expressed in part as a proteoglycan exhibiting chondroitin sulfate glycans and in part as a non-proteoglycan form. The relative amount of both forms depends on tissues and tissue maturation. In the cerebellum the 2 forms coexist while in the cerebrum the proteoglycan form is predominant. In terms of processing, phosphorylated; in intracellular and extracellular parts. In terms of tissue distribution, expressed in olfactory bulb, hippocampus, brain stem, spinal cord, cerebrum and cerebellum. Expressed by Purkinje cells in the cerebellum (at protein level). Expressed in immature and mature cerebellum (isoform 1, isoform 2 and isoform 3).

The protein localises to the cell membrane. The protein resides in the synaptic cell membrane. Its subcellular location is the endoplasmic reticulum membrane. It localises to the golgi apparatus membrane. It is found in the cell surface. The protein localises to the secreted. May function as a growth and differentiation factor involved in neuritogenesis. May induce ERBB3 activation. The sequence is that of Chondroitin sulfate proteoglycan 5 (Cspg5) from Mus musculus (Mouse).